The sequence spans 145 residues: 3-hydroxyacyl-[acyl-carrier-protein] dehydratase FabZ (145 aa).

His-47 is a catalytic residue.

This sequence belongs to the thioester dehydratase family. FabZ subfamily.

It localises to the cytoplasm. The catalysed reaction is a (3R)-hydroxyacyl-[ACP] = a (2E)-enoyl-[ACP] + H2O. Involved in unsaturated fatty acids biosynthesis. Catalyzes the dehydration of short chain beta-hydroxyacyl-ACPs and long chain saturated and unsaturated beta-hydroxyacyl-ACPs. This Ruthia magnifica subsp. Calyptogena magnifica protein is 3-hydroxyacyl-[acyl-carrier-protein] dehydratase FabZ.